The chain runs to 158 residues: NAD(P)H-quinone oxidoreductase subunit N (158 aa).

It belongs to the complex I NdhN subunit family. In terms of assembly, NDH-1 can be composed of about 15 different subunits; different subcomplexes with different compositions have been identified which probably have different functions.

The protein resides in the cellular thylakoid membrane. The enzyme catalyses a plastoquinone + NADH + (n+1) H(+)(in) = a plastoquinol + NAD(+) + n H(+)(out). It catalyses the reaction a plastoquinone + NADPH + (n+1) H(+)(in) = a plastoquinol + NADP(+) + n H(+)(out). NDH-1 shuttles electrons from an unknown electron donor, via FMN and iron-sulfur (Fe-S) centers, to quinones in the respiratory and/or the photosynthetic chain. The immediate electron acceptor for the enzyme in this species is believed to be plastoquinone. Couples the redox reaction to proton translocation, and thus conserves the redox energy in a proton gradient. Cyanobacterial NDH-1 also plays a role in inorganic carbon-concentration. The sequence is that of NAD(P)H-quinone oxidoreductase subunit N from Cyanothece sp. (strain PCC 7425 / ATCC 29141).